We begin with the raw amino-acid sequence, 447 residues long: NAD-dependent histone deacetylase HST3 (447 aa).

The interval 1-21 is disordered; it reads MTSVSPSPPASRSGSMCSDLP. The Deacetylase sirtuin-type domain maps to 35–363; that stretch reads LDADDEVLRR…IKKLRQLKRE (329 aa). Residues 60–79 and 151–154 contribute to the NAD(+) site; these read GAGISCNAGIPDFRSSDGLY and QNID. The Proton acceptor role is filled by H187. Residues C195, C198, C220, and C223 each contribute to the Zn(2+) site. NAD(+)-binding positions include 282-284, 312-314, and C333; these read GTS and NKT. Positions 365–375 are enriched in basic and acidic residues; sequence SDLRKQMKAQK. 2 disordered regions span residues 365–393 and 411–447; these read SDLRKQMKAQKDSIGTPPTTPLRTAQGID and KRKILSPENSSEEDEEENLDTRKRAKIRPTFGDNQAS.

The protein belongs to the sirtuin family. Class I subfamily. Zn(2+) is required as a cofactor.

It localises to the cytoplasm. The protein resides in the nucleus. It catalyses the reaction N(6)-acetyl-L-lysyl-[protein] + NAD(+) + H2O = 2''-O-acetyl-ADP-D-ribose + nicotinamide + L-lysyl-[protein]. Functionally, NAD-dependent histone deacetylase, which contributes together with HST4 to histone H3 'Lys-56' deacetylation, regulation of telomeric silencing, proper cell cycle progression, DNA damage control, DNA recombination, and genomic maintenance. This chain is NAD-dependent histone deacetylase HST3 (HST3), found in Saccharomyces cerevisiae (strain ATCC 204508 / S288c) (Baker's yeast).